A 218-amino-acid chain; its full sequence is Cytidylate kinase (218 aa).

An ATP-binding site is contributed by 7 to 15 (GPSASGKSS).

It belongs to the cytidylate kinase family. Type 1 subfamily.

It localises to the cytoplasm. The catalysed reaction is CMP + ATP = CDP + ADP. It carries out the reaction dCMP + ATP = dCDP + ADP. The polypeptide is Cytidylate kinase (Borrelia duttonii (strain Ly)).